Here is a 469-residue protein sequence, read N- to C-terminus: GTPase Der (469 aa).

2 consecutive EngA-type G domains span residues 3–166 (PVIA…PEDE) and 177–350 (LRLA…ESAN). GTP is bound by residues 9-16 (GRPNVGKS), 56-60 (DTGGI), 118-121 (NKVD), 183-190 (GRPNVGKS), 230-234 (DTAGV), and 295-298 (NKWD). Positions 351 to 435 (LKVSPAKLTQ…PVKIEFKTSE (85 aa)) constitute a KH-like domain.

Belongs to the TRAFAC class TrmE-Era-EngA-EngB-Septin-like GTPase superfamily. EngA (Der) GTPase family. In terms of assembly, associates with the 50S ribosomal subunit.

In terms of biological role, GTPase that plays an essential role in the late steps of ribosome biogenesis. This chain is GTPase Der, found in Acinetobacter baumannii (strain SDF).